The chain runs to 270 residues: uncharacterized protein (270 aa).

Residue His171 is the Proton donor of the active site. The active-site Nucleophile is the Cys261.

The protein belongs to the DDAH family.

This is an uncharacterized protein from Aeropyrum pernix (strain ATCC 700893 / DSM 11879 / JCM 9820 / NBRC 100138 / K1).